The sequence spans 171 residues: Ribosome maturation factor RimM (171 aa).

The PRC barrel domain occupies 96–170; that stretch reads AEGEYYYHEI…LVTIHVTEGL (75 aa).

The protein belongs to the RimM family. In terms of assembly, binds ribosomal protein uS19.

The protein resides in the cytoplasm. In terms of biological role, an accessory protein needed during the final step in the assembly of 30S ribosomal subunit, possibly for assembly of the head region. Essential for efficient processing of 16S rRNA. May be needed both before and after RbfA during the maturation of 16S rRNA. It has affinity for free ribosomal 30S subunits but not for 70S ribosomes. In Bacillus anthracis (strain A0248), this protein is Ribosome maturation factor RimM.